The following is a 231-amino-acid chain: 6-phosphogluconolactonase (231 aa).

Belongs to the glucosamine/galactosamine-6-phosphate isomerase family. 6-phosphogluconolactonase subfamily.

It catalyses the reaction 6-phospho-D-glucono-1,5-lactone + H2O = 6-phospho-D-gluconate + H(+). It functions in the pathway carbohydrate degradation; pentose phosphate pathway; D-ribulose 5-phosphate from D-glucose 6-phosphate (oxidative stage): step 2/3. Hydrolysis of 6-phosphogluconolactone to 6-phosphogluconate. This chain is 6-phosphogluconolactonase (pgl), found in Neisseria meningitidis serogroup A / serotype 4A (strain DSM 15465 / Z2491).